The primary structure comprises 289 residues: Iodotyrosine deiodinase 1 (289 aa).

Residues 1–21 form a helical membrane-spanning segment; the sequence is MFLLTPVLVAVVCILMVWIFK. FMN contacts are provided by residues 100-104 and 128-129; these read RRSVR and SG. The 3,5-diiodo-L-tyrosine site is built by Ala-130, Glu-157, Tyr-161, and Lys-182. The 3-iodo-L-tyrosine site is built by Ala-130, Glu-157, Tyr-161, and Lys-182. Residues 237–239 and Arg-279 contribute to the FMN site; that span reads TTT.

Belongs to the nitroreductase family. In terms of assembly, homodimer. Requires FMN as cofactor. As to expression, detected in thyroid (at protein level).

The protein localises to the cell membrane. It is found in the cytoplasmic vesicle membrane. The enzyme catalyses 2 iodide + L-tyrosine + 2 NADP(+) = 3,5-diiodo-L-tyrosine + 2 NADPH + H(+). The catalysed reaction is iodide + L-tyrosine + NADP(+) = 3-iodo-L-tyrosine + NADPH. It carries out the reaction 3-iodo-L-tyrosine + iodide + NADP(+) = 3,5-diiodo-L-tyrosine + NADPH + H(+). It catalyses the reaction L-tyrosine + chloride + NADP(+) = 3-chloro-L-tyrosine + NADPH. The enzyme catalyses bromide + L-tyrosine + NADP(+) = 3-bromo-L-tyrosine + NADPH. Catalyzes the dehalogenation of halotyrosines such as 3-bromo-L-tyrosine, 3-chloro-L-tyrosine, 3-iodo-L-tyrosine and 3,5-diiodo-L-tyrosine. During thyroid hormone biosynthesis, facilitates iodide salvage by catalysing the oxidative NADPH-dependent deiodination of the halogenated by-products of thyroid hormone production, monoiodotyrosine (L-MIT) and diiodotyrosine (L-DIT). The scavanged iodide can then reenter the hormone-producing pathways. Acts more efficiently on 3-iodo-L-tyrosine than 3,5-diiodo-L-tyrosine. This is Iodotyrosine deiodinase 1 (IYD) from Sus scrofa (Pig).